The primary structure comprises 294 residues: uncharacterized protein (294 aa).

Disordered regions lie at residues 1-148 and 268-294; these read MFLR…LEKP and DEAA…GKGL. Residues Ser-34 and Ser-35 each carry the phosphoserine modification. A compositionally biased stretch (low complexity) spans 35–44; sequence SSENSGSDWD. Residues 52–62 show a composition bias toward basic and acidic residues; sequence DVGHPKTKDSG. 2 positions are modified to phosphoserine: Ser-71 and Ser-90. Basic and acidic residues-rich tracts occupy residues 73 to 92 and 278 to 294; these read PSKE…DSLK and GLER…GKGL.

This is an uncharacterized protein from Homo sapiens (Human).